A 1369-amino-acid polypeptide reads, in one-letter code: DNA-directed RNA polymerase subunit beta (1369 aa).

This sequence belongs to the RNA polymerase beta chain family. In terms of assembly, the RNAP catalytic core consists of 2 alpha, 1 beta, 1 beta' and 1 omega subunit. When a sigma factor is associated with the core the holoenzyme is formed, which can initiate transcription.

The enzyme catalyses RNA(n) + a ribonucleoside 5'-triphosphate = RNA(n+1) + diphosphate. DNA-dependent RNA polymerase catalyzes the transcription of DNA into RNA using the four ribonucleoside triphosphates as substrates. The polypeptide is DNA-directed RNA polymerase subunit beta (Solidesulfovibrio magneticus (strain ATCC 700980 / DSM 13731 / RS-1) (Desulfovibrio magneticus)).